The chain runs to 621 residues: Exonuclease 3'-5' domain-containing protein 2 (621 aa).

At 1–4 (MSRQ) the chain is on the mitochondrial intermembrane side. The helical transmembrane segment at 5-25 (NLVALTVTTLLGVAVGGFVLW) threads the bilayer. Residues 26-621 (KGIQRRRRSK…FGEDLPIQLS (596 aa)) are Cytoplasmic-facing. The interval 34–68 (SKTSPVTQQPQQKVLGSRELPPPEDDQLHSSAPRS) is disordered. The span at 36 to 47 (TSPVTQQPQQKV) shows a compositional bias: polar residues. A divalent metal cation-binding residues include D108, E110, and D246. Residues 155 to 247 (ILADGTILKV…DQVIYAARDA (93 aa)) form the 3'-5' exonuclease domain. A disordered region spans residues 299-343 (RLGEEVNGEATESQQKPRNKKSKMDGMVPGNHQGRDPRKHKRKPL).

This sequence belongs to the EXD2 family. As to quaternary structure, homodimer. Interacts with RBBP8, MRE11 and BRCA1. Mg(2+) serves as cofactor. Requires Mn(2+) as cofactor.

It is found in the mitochondrion outer membrane. The protein resides in the mitochondrion matrix. Its subcellular location is the nucleus. It localises to the chromosome. The enzyme catalyses Exonucleolytic cleavage in the 3'- to 5'-direction to yield nucleoside 5'-phosphates.. Exonuclease that has both 3'-5' exoribonuclease and exodeoxyribonuclease activities, depending on the divalent metal cation used as cofactor. In presence of Mg(2+), only shows 3'-5' exoribonuclease activity, while it shows both exoribonuclease and exodeoxyribonuclease activities in presence of Mn(2+). Acts as an exoribonuclease in mitochondrion, possibly by regulating ATP production and mitochondrial translation. Also involved in the response to DNA damage. Acts as 3'-5' exodeoxyribonuclease for double-strand breaks resection and efficient homologous recombination. Plays a key role in controlling the initial steps of chromosomal break repair, it is recruited to chromatin in a damage-dependent manner and functionally interacts with the MRN complex to accelerate resection through its 3'-5' exonuclease activity, which efficiently processes double-stranded DNA substrates containing nicks. Also involved in response to replicative stress: recruited to stalled forks and is required to stabilize and restart stalled replication forks by restraining excessive fork regression, thereby suppressing their degradation. The polypeptide is Exonuclease 3'-5' domain-containing protein 2 (Homo sapiens (Human)).